The sequence spans 221 residues: NEDD8 ultimate buster 1 (221 aa).

UBA domains are found at residues 1 to 19 (LGLR…HIAN), 30 to 76 (EERE…LLHN), and 95 to 135 (SPSQ…LVHN). Residues 136–193 (GGRLPPDLQLSAEDSSSTPSTSPSDSAGTSSASTDEDMETEAVNEILEDIPEHEEDYL) form a disordered region. Low complexity predominate over residues 146–168 (SAEDSSSTPSTSPSDSAGTSSAS). The span at 169 to 193 (TDEDMETEAVNEILEDIPEHEEDYL) shows a compositional bias: acidic residues.

In terms of assembly, directly interacts with NEDD8 and PSMD4/S5a, a member of the regulatory subunit of the 26S proteasome. Interacts with AIPL1.

It is found in the nucleus. Functionally, specific down-regulator of the NEDD8 conjugation system. Recruits NEDD8 and its conjugates to the proteasome for degradation. In Bos taurus (Bovine), this protein is NEDD8 ultimate buster 1 (NUB1).